Here is a 540-residue protein sequence, read N- to C-terminus: Probable G-protein coupled receptor 75 (540 aa).

The Extracellular segment spans residues 1-46 (MNTSAPLQNVPNATLLNMPPLHGGNSTSLQEGLRDFIHTATLVTCT). Residues asparagine 2 and asparagine 25 are each glycosylated (N-linked (GlcNAc...) asparagine). Residues 47-67 (FLLAIIFCLGSYGNFIVFLSF) form a helical membrane-spanning segment. At 68-86 (FDPSFRKFRTNFDFMILNL) the chain is on the cytoplasmic side. The helical transmembrane segment at 87–107 (SFCDLFICGVTAPMFTFVLFF) threads the bilayer. The Extracellular segment spans residues 108-120 (SSASSIPDSFCFT). The helical transmembrane segment at 121 to 141 (FHLTSSGFVIMSLKMVAVIAL) threads the bilayer. Residues 142-160 (HRLRMVMGKQPNCTASFSC) lie on the Cytoplasmic side of the membrane. The helical transmembrane segment at 161 to 181 (ILLLTLLLWATSFTLATLATL) threads the bilayer. Over 182-205 (RTNKSHLCLPMSSLMDGEGKAILS) the chain is Extracellular. Residue asparagine 184 is glycosylated (N-linked (GlcNAc...) asparagine). The helical transmembrane segment at 206–226 (LYVVDFTFCVAVVSVSYIMIA) threads the bilayer. Residues 227–318 (QTLRKNAQVK…INFSTAKDSK (92 aa)) lie on the Cytoplasmic side of the membrane. Residues 319 to 339 (AVVTCVVIVLSVLVCCLPLGI) traverse the membrane as a helical segment. Topologically, residues 340–350 (SLVQMVLSDNG) are extracellular. Residues 351–371 (SFILYQFELFGFTLIFFKSGL) form a helical membrane-spanning segment. Residues 372 to 540 (NPFIYSRNSA…SAKQIPIPSV (169 aa)) lie on the Cytoplasmic side of the membrane. Residues 443–475 (DQACGPSHSKESAASPKVSAGHQPCGQSSSTPI) are disordered.

This sequence belongs to the G-protein coupled receptor 1 family. As to expression, highly expressed in brain and heart. Also detected in skeletal muscle, liver and kidney. Also expressed by islet cells (at protein level).

The protein localises to the cell membrane. Its function is as follows. G protein-coupled receptor that is activated by the chemokine CCL5/RANTES. Probably coupled to heterotrimeric Gq proteins, it stimulates inositol trisphosphate production and calcium mobilization upon activation. Together with CCL5/RANTES, may play a role in neuron survival through activation of a downstream signaling pathway involving the PI3, Akt and MAP kinases. CCL5/RANTES may also regulate insulin secretion by pancreatic islet cells through activation of this receptor. The protein is Probable G-protein coupled receptor 75 (Gpr75) of Mus musculus (Mouse).